We begin with the raw amino-acid sequence, 267 residues long: D-aminoacyl-tRNA deacylase (267 aa).

The protein belongs to the DtdA deacylase family. Monomer. Requires Zn(2+) as cofactor.

The catalysed reaction is a D-aminoacyl-tRNA + H2O = a tRNA + a D-alpha-amino acid + H(+). It catalyses the reaction glycyl-tRNA(Ala) + H2O = tRNA(Ala) + glycine + H(+). Functionally, D-aminoacyl-tRNA deacylase with broad substrate specificity. By recycling D-aminoacyl-tRNA to D-amino acids and free tRNA molecules, this enzyme counteracts the toxicity associated with the formation of D-aminoacyl-tRNA entities in vivo. The chain is D-aminoacyl-tRNA deacylase from Methanothrix thermoacetophila (strain DSM 6194 / JCM 14653 / NBRC 101360 / PT) (Methanosaeta thermophila).